Consider the following 446-residue polypeptide: tRNA(Ile2) 2-agmatinylcytidine synthetase TiaS (446 aa).

The protein belongs to the TiaS family.

It is found in the cytoplasm. It carries out the reaction cytidine(34) in tRNA(Ile2) + agmatine + ATP + H2O = 2-agmatinylcytidine(34) in tRNA(Ile2) + AMP + 2 phosphate + 2 H(+). Functionally, ATP-dependent agmatine transferase that catalyzes the formation of 2-agmatinylcytidine (agm2C) at the wobble position (C34) of tRNA(Ile2), converting the codon specificity from AUG to AUA. The polypeptide is tRNA(Ile2) 2-agmatinylcytidine synthetase TiaS (Cenarchaeum symbiosum (strain A)).